The following is a 360-amino-acid chain: Transcriptional coactivator MYCFIDRAFT_190109 (360 aa).

In terms of domain architecture, HTH iclR-type spans Gly3–Gln67. The segment at residues Ala33–Arg52 is a DNA-binding region (H-T-H motif).

It is found in the nucleus. Transcriptional coactivator; part of the gene cluster that mediates the biosynthesis of an emodin derivative that may be involved in black Sigatoka disease of banana. With MYCFIDRAFT_198930, coregulates the production of the PKS8-1 cluster product. This Pseudocercospora fijiensis (strain CIRAD86) (Black leaf streak disease fungus) protein is Transcriptional coactivator MYCFIDRAFT_190109.